We begin with the raw amino-acid sequence, 257 residues long: Large ribosomal subunit protein uL2 (257 aa).

Residues 207 to 231 (VEHPFGGGNHQHIGKPSTIRRDAPA) form a disordered region.

The protein belongs to the universal ribosomal protein uL2 family. In terms of assembly, component of the large ribosomal subunit.

The protein resides in the cytoplasm. In terms of biological role, component of the large ribosomal subunit. The ribosome is a large ribonucleoprotein complex responsible for the synthesis of proteins in the cell. The protein is Large ribosomal subunit protein uL2 (rpl8) of Xenopus tropicalis (Western clawed frog).